The sequence spans 314 residues: Glutathione synthetase (314 aa).

Residues 125–309 (KLFVMNFPQL…VAAKVWDTIE (185 aa)) form the ATP-grasp domain. 151–207 (RDKHGAVVMKPLHGHGGAAVFRVMPQDMNFGSLFDMFTVTFKEPWVIQQFIPEVKHG) provides a ligand contact to ATP. Mg(2+) contacts are provided by Glu280 and Asn282.

Belongs to the prokaryotic GSH synthase family. Mg(2+) serves as cofactor. Mn(2+) is required as a cofactor.

The catalysed reaction is gamma-L-glutamyl-L-cysteine + glycine + ATP = glutathione + ADP + phosphate + H(+). The protein operates within sulfur metabolism; glutathione biosynthesis; glutathione from L-cysteine and L-glutamate: step 2/2. This Bradyrhizobium diazoefficiens (strain JCM 10833 / BCRC 13528 / IAM 13628 / NBRC 14792 / USDA 110) protein is Glutathione synthetase.